A 143-amino-acid chain; its full sequence is Hemoglobin cathodic subunit alpha (143 aa).

At Ser-2 the chain carries N-acetylserine. Residues 2–143 (SLTAKDKSLI…LGAALSDKYR (142 aa)) enclose the Globin domain. His-60 serves as a coordination point for O2. His-89 contacts heme b.

This sequence belongs to the globin family. As to quaternary structure, heterotetramer of two alpha chains and two beta chains. In terms of tissue distribution, red blood cells.

Involved in oxygen transport from gills to the various peripheral tissues. The protein is Hemoglobin cathodic subunit alpha of Anguilla anguilla (European freshwater eel).